Here is a 960-residue protein sequence, read N- to C-terminus: RasGEF domain-containing serine/threonine-protein kinase X (960 aa).

In terms of domain architecture, Protein kinase spans 21 to 274 (LEFNEKIGKG…FDEILSQLKV (254 aa)). ATP-binding positions include 27–35 (IGKGSFGSV) and lysine 48. Catalysis depends on aspartate 140, which acts as the Proton acceptor. Low complexity predominate over residues 314–368 (NISFSPNNSNNNNNNNNNISNISPDITTGIQQINLSSSGGSNNSSPSTPPQGSQL). Disordered regions lie at residues 314 to 372 (NISF…VSLA) and 393 to 413 (GQLS…HKPS). In terms of domain architecture, N-terminal Ras-GEF spans 437-565 (PCYAALTSHI…LGTTISNNEL (129 aa)). The disordered stretch occupies residues 596 to 651 (NNNNNNNNNPVNNINNINNNNSVNSSSSNNNNNNNNNNSNNNNNNNNNNNNNNNNN). Positions 712–957 (HSTELARQIT…KNNSLKCEPP (246 aa)) constitute a Ras-GEF domain.

This sequence belongs to the protein kinase superfamily. TKL Ser/Thr protein kinase family.

It catalyses the reaction L-seryl-[protein] + ATP = O-phospho-L-seryl-[protein] + ADP + H(+). The enzyme catalyses L-threonyl-[protein] + ATP = O-phospho-L-threonyl-[protein] + ADP + H(+). In terms of biological role, promotes the exchange of Ras-bound GDP by GTP. The polypeptide is RasGEF domain-containing serine/threonine-protein kinase X (gefX) (Dictyostelium discoideum (Social amoeba)).